The chain runs to 155 residues: Protein FAM162A (155 aa).

The tract at residues 77–103 (RFKKEEEIPETISFEMLDAAKNKIRVK) is required for proapoptotic activity. The helical transmembrane segment at 102–121 (VKVSYLMIALTVAGCVYMVI) threads the bilayer.

Belongs to the UPF0389 family. As to quaternary structure, interacts with HSP90AB1; HSP90AB1 is essential for FAM162A mitochondrial localization and pro-apoptotic activity. Interacts with VDAC2; the interaction is probably involved in inducing mitochondrial permeability transition.

It is found in the mitochondrion membrane. Its function is as follows. Proposed to be involved in regulation of apoptosis; the exact mechanism may differ between cell types/tissues. May be involved in hypoxia-induced cell death of transformed cells implicating cytochrome C release and caspase activation (such as CASP9) and inducing mitochondrial permeability transition. May be involved in hypoxia-induced cell death of neuronal cells probably by promoting release of AIFM1 from mitochondria to cytoplasm and its translocation to the nucleus; however, the involvement of caspases has been reported conflictingly. This is Protein FAM162A (Fam162a) from Rattus norvegicus (Rat).